Consider the following 109-residue polypeptide: Aquaporin-2 (109 aa).

Topologically, residues Ser-1–Arg-6 are cytoplasmic. Residues Ala-7–Leu-27 traverse the membrane as a helical segment. The Extracellular segment spans residues Asn-28–Ser-35. Residues Val-36–Leu-54 traverse the membrane as a helical segment. The Cytoplasmic segment spans residues Gly-55–Gly-59. The segment at residues Ala-60–Ala-69 is an intramembrane region (discontinuously helical). Positions Asn-63–Ala-65 match the NPA 1 motif. The Cytoplasmic portion of the chain corresponds to Cys-70–Arg-80. A helical membrane pass occupies residues Ala-81 to Val-102. Residues Thr-103 to Gly-109 are Extracellular-facing.

It belongs to the MIP/aquaporin (TC 1.A.8) family. As to quaternary structure, homotetramer. Serine phosphorylation is necessary and sufficient for expression at the apical membrane. Endocytosis is not phosphorylation-dependent. In terms of processing, N-glycosylated.

It is found in the apical cell membrane. Its subcellular location is the basolateral cell membrane. The protein localises to the cell membrane. The protein resides in the cytoplasmic vesicle membrane. It localises to the golgi apparatus. It is found in the trans-Golgi network membrane. It catalyses the reaction H2O(in) = H2O(out). It carries out the reaction glycerol(in) = glycerol(out). Its function is as follows. Forms a water-specific channel that provides the plasma membranes of renal collecting duct with high permeability to water, thereby permitting water to move in the direction of an osmotic gradient. Plays an essential role in renal water homeostasis. Could also be permeable to glycerol. The chain is Aquaporin-2 from Erinaceus europaeus (Western European hedgehog).